We begin with the raw amino-acid sequence, 488 residues long: 1-aminocyclopropane-1-carboxylate synthase-like protein 1 (488 aa).

Lysine 273 is modified (N6-(pyridoxal phosphate)lysine).

This sequence belongs to the class-I pyridoxal-phosphate-dependent aminotransferase family. As to quaternary structure, homodimer. As to expression, expressed in young leaves and flowers. Not expressed in roots.

In Arabidopsis thaliana (Mouse-ear cress), this protein is 1-aminocyclopropane-1-carboxylate synthase-like protein 1 (ACS1).